We begin with the raw amino-acid sequence, 206 residues long: uncharacterized protein (206 aa).

A disordered region spans residues 128-206; the sequence is KRYNVQKPKV…DQSWLDELLR (79 aa). The span at 171-181 shows a compositional bias: polar residues; that stretch reads YISSNHSSMHI.

It localises to the cytoplasm. The protein resides in the nucleus. This is an uncharacterized protein from Schizosaccharomyces pombe (strain 972 / ATCC 24843) (Fission yeast).